The following is a 231-amino-acid chain: Ribose-5-phosphate isomerase A (231 aa).

Substrate-binding positions include 32 to 35 (TGST), 85 to 88 (DGAD), and 98 to 101 (KGGG). Residue Glu107 is the Proton acceptor of the active site. Lys125 contacts substrate.

It belongs to the ribose 5-phosphate isomerase family. In terms of assembly, homodimer.

It catalyses the reaction aldehydo-D-ribose 5-phosphate = D-ribulose 5-phosphate. Its pathway is carbohydrate degradation; pentose phosphate pathway; D-ribose 5-phosphate from D-ribulose 5-phosphate (non-oxidative stage): step 1/1. In terms of biological role, catalyzes the reversible conversion of ribose-5-phosphate to ribulose 5-phosphate. The sequence is that of Ribose-5-phosphate isomerase A from Burkholderia mallei (strain NCTC 10247).